A 434-amino-acid chain; its full sequence is Transcription elongation factor B polypeptide 3 (434 aa).

Residues 142–161 (KPEPVDVHEQQASSSSMSYQ) are disordered. The span at 151-160 (QQASSSSMSY) shows a compositional bias: polar residues. The tract at residues 221–230 (TLVSLCQTVL) is BC box. Positions 237–281 (IDHVGIVPFDLLKPVLDHASTDQLRHILDVNPMLVEDADEMFHEM) constitute an F-box domain. A disordered region spans residues 391 to 415 (ITPRGGGVPSTSRSRSNNNNNMNNG).

Heterotrimer of an A, B and C subunit.

The protein resides in the nucleus. Its function is as follows. SIII, also known as elongin, is a general transcription elongation factor that increases the RNA polymerase II transcription elongation past template-encoded arresting sites. Subunit A is transcriptionally active and its transcription activity is strongly enhanced by binding to the dimeric complex of the SIII regulatory subunits B and C (elongin BC complex). In Caenorhabditis elegans, this protein is Transcription elongation factor B polypeptide 3.